Here is a 425-residue protein sequence, read N- to C-terminus: Glutamate-1-semialdehyde 2,1-aminomutase (425 aa).

K265 bears the N6-(pyridoxal phosphate)lysine mark.

Belongs to the class-III pyridoxal-phosphate-dependent aminotransferase family. HemL subfamily. Homodimer. Requires pyridoxal 5'-phosphate as cofactor.

It localises to the cytoplasm. It catalyses the reaction (S)-4-amino-5-oxopentanoate = 5-aminolevulinate. It participates in porphyrin-containing compound metabolism; protoporphyrin-IX biosynthesis; 5-aminolevulinate from L-glutamyl-tRNA(Glu): step 2/2. The chain is Glutamate-1-semialdehyde 2,1-aminomutase from Psychromonas ingrahamii (strain DSM 17664 / CCUG 51855 / 37).